Consider the following 166-residue polypeptide: Transcription antitermination protein NusB (166 aa).

Residues Met-1–Asp-18 show a composition bias toward basic and acidic residues. The interval Met-1–Glu-30 is disordered.

It belongs to the NusB family.

Functionally, involved in transcription antitermination. Required for transcription of ribosomal RNA (rRNA) genes. Binds specifically to the boxA antiterminator sequence of the ribosomal RNA (rrn) operons. This chain is Transcription antitermination protein NusB, found in Pseudomonas fluorescens (strain Pf0-1).